Consider the following 130-residue polypeptide: Small ribosomal subunit protein uS11 (130 aa).

Residues 108 to 130 (IEDVTPIPHDGTGRPGGKRGRRV) are disordered.

This sequence belongs to the universal ribosomal protein uS11 family. Part of the 30S ribosomal subunit.

In terms of biological role, located on the platform of the 30S subunit. In Methanothermobacter thermautotrophicus (strain ATCC 29096 / DSM 1053 / JCM 10044 / NBRC 100330 / Delta H) (Methanobacterium thermoautotrophicum), this protein is Small ribosomal subunit protein uS11.